A 185-amino-acid chain; its full sequence is Ribosome-recycling factor (185 aa).

This sequence belongs to the RRF family.

Its subcellular location is the cytoplasm. Its function is as follows. Responsible for the release of ribosomes from messenger RNA at the termination of protein biosynthesis. May increase the efficiency of translation by recycling ribosomes from one round of translation to another. This is Ribosome-recycling factor from Parafrankia sp. (strain EAN1pec).